A 372-amino-acid polypeptide reads, in one-letter code: MKQLPILEPGDKPRKAAWYTLTCPGDKPCPRVGHSCSYFPPVGEAEKGKVFIVGGANPNQSFSDVHTMDLGTHRWDTATREGLLPRYEHASFLPSCSPHSIWVFGGADQSGNRNCLQVMNPEARTWSTPEVTGCPPSPRTFHTSSAAIGNHLYVFGGGERGAQPVQDVKLHVFDANTLTWAQPETHGSPPSPRHGHAMVAAGTKLFIHGGLAGDRFFDDLHCIDIGDMSWQKLGPTGTAPVGCAAHAAVAVGHHVYVFGGMTATGALNTMYKYHTEKQHWTILQFDTSLPPGRLDHSMCVIPWPVMSASDTEDSGSVILSLQDEKGDAAEKPETRSGGSREESPTTLLLCFVFGGMNTEGEIYDDCLVTVVD.

5 Kelch repeats span residues 49-95 (KVFI…FLPS), 100-146 (SIWV…TSSA), 151-203 (HLYV…AAGT), 204-250 (KLFI…AAVA), and 254-303 (HVYV…VIPW). Positions 321–342 (LQDEKGDAAEKPETRSGGSREE) are disordered. The segment covering 322–342 (QDEKGDAAEKPETRSGGSREE) has biased composition (basic and acidic residues). Residues 349–372 (LCFVFGGMNTEGEIYDDCLVTVVD) form a Kelch 6 repeat.

In terms of assembly, interacts with PIKFYVE; the interaction recruits RABEPK to the endosomal membrane. Interacts with RAB9 in its GTP-bound conformation. Post-translationally, phosphorylated on Ser residues by PIKFYVE.

It is found in the cytoplasm. The protein resides in the endosome membrane. In terms of biological role, rab9 effector required for endosome to trans-Golgi network (TGN) transport. The sequence is that of Rab9 effector protein with kelch motifs (Rabepk) from Rattus norvegicus (Rat).